A 515-amino-acid chain; its full sequence is ATP synthase subunit alpha (515 aa).

Residue 169 to 176 (GDRQTGKT) participates in ATP binding.

The protein belongs to the ATPase alpha/beta chains family. F-type ATPases have 2 components, CF(1) - the catalytic core - and CF(0) - the membrane proton channel. CF(1) has five subunits: alpha(3), beta(3), gamma(1), delta(1), epsilon(1). CF(0) has three main subunits: a(1), b(2) and c(9-12). The alpha and beta chains form an alternating ring which encloses part of the gamma chain. CF(1) is attached to CF(0) by a central stalk formed by the gamma and epsilon chains, while a peripheral stalk is formed by the delta and b chains.

It is found in the cell inner membrane. It carries out the reaction ATP + H2O + 4 H(+)(in) = ADP + phosphate + 5 H(+)(out). Produces ATP from ADP in the presence of a proton gradient across the membrane. The alpha chain is a regulatory subunit. The sequence is that of ATP synthase subunit alpha from Neisseria meningitidis serogroup C / serotype 2a (strain ATCC 700532 / DSM 15464 / FAM18).